Consider the following 444-residue polypeptide: Methylenetetrahydrofolate--tRNA-(uracil-5-)-methyltransferase TrmFO (444 aa).

10–15 (GAGLAG) contributes to the FAD binding site.

This sequence belongs to the MnmG family. TrmFO subfamily. It depends on FAD as a cofactor.

Its subcellular location is the cytoplasm. The enzyme catalyses uridine(54) in tRNA + (6R)-5,10-methylene-5,6,7,8-tetrahydrofolate + NADH + H(+) = 5-methyluridine(54) in tRNA + (6S)-5,6,7,8-tetrahydrofolate + NAD(+). The catalysed reaction is uridine(54) in tRNA + (6R)-5,10-methylene-5,6,7,8-tetrahydrofolate + NADPH + H(+) = 5-methyluridine(54) in tRNA + (6S)-5,6,7,8-tetrahydrofolate + NADP(+). Its function is as follows. Catalyzes the folate-dependent formation of 5-methyl-uridine at position 54 (M-5-U54) in all tRNAs. This Streptococcus agalactiae serotype III (strain NEM316) protein is Methylenetetrahydrofolate--tRNA-(uracil-5-)-methyltransferase TrmFO.